We begin with the raw amino-acid sequence, 396 residues long: Phosphoglycerate kinase (396 aa).

Residues 21-23, Arg36, 59-62, Arg119, and Arg156 each bind substrate; these read DFN and HLGR. ATP contacts are provided by residues Lys207, Glu325, and 352-355; that span reads GGDS.

This sequence belongs to the phosphoglycerate kinase family. In terms of assembly, monomer.

The protein localises to the cytoplasm. The catalysed reaction is (2R)-3-phosphoglycerate + ATP = (2R)-3-phospho-glyceroyl phosphate + ADP. The protein operates within carbohydrate degradation; glycolysis; pyruvate from D-glyceraldehyde 3-phosphate: step 2/5. This chain is Phosphoglycerate kinase, found in Lacticaseibacillus casei (strain BL23) (Lactobacillus casei).